A 188-amino-acid chain; its full sequence is Elongation factor P (188 aa).

It belongs to the elongation factor P family.

It localises to the cytoplasm. Its pathway is protein biosynthesis; polypeptide chain elongation. In terms of biological role, involved in peptide bond synthesis. Stimulates efficient translation and peptide-bond synthesis on native or reconstituted 70S ribosomes in vitro. Probably functions indirectly by altering the affinity of the ribosome for aminoacyl-tRNA, thus increasing their reactivity as acceptors for peptidyl transferase. The sequence is that of Elongation factor P from Rhodopseudomonas palustris (strain BisA53).